A 368-amino-acid polypeptide reads, in one-letter code: Queuine tRNA-ribosyltransferase (368 aa).

Aspartate 89 serves as the catalytic Proton acceptor. Substrate-binding positions include 89 to 93, aspartate 143, glutamine 187, and glycine 214; that span reads DSGGF. Aspartate 264 acts as the Nucleophile in catalysis. Positions 269–273 are RNA binding; important for wobble base 34 recognition; sequence TRNAR. 4 residues coordinate Zn(2+): cysteine 302, cysteine 304, cysteine 307, and histidine 333.

It belongs to the queuine tRNA-ribosyltransferase family. In terms of assembly, homodimer. Within each dimer, one monomer is responsible for RNA recognition and catalysis, while the other monomer binds to the replacement base PreQ1. Zn(2+) is required as a cofactor.

It carries out the reaction 7-aminomethyl-7-carbaguanine + guanosine(34) in tRNA = 7-aminomethyl-7-carbaguanosine(34) in tRNA + guanine. It functions in the pathway tRNA modification; tRNA-queuosine biosynthesis. Catalyzes the base-exchange of a guanine (G) residue with the queuine precursor 7-aminomethyl-7-deazaguanine (PreQ1) at position 34 (anticodon wobble position) in tRNAs with GU(N) anticodons (tRNA-Asp, -Asn, -His and -Tyr). Catalysis occurs through a double-displacement mechanism. The nucleophile active site attacks the C1' of nucleotide 34 to detach the guanine base from the RNA, forming a covalent enzyme-RNA intermediate. The proton acceptor active site deprotonates the incoming PreQ1, allowing a nucleophilic attack on the C1' of the ribose to form the product. After dissociation, two additional enzymatic reactions on the tRNA convert PreQ1 to queuine (Q), resulting in the hypermodified nucleoside queuosine (7-(((4,5-cis-dihydroxy-2-cyclopenten-1-yl)amino)methyl)-7-deazaguanosine). The polypeptide is Queuine tRNA-ribosyltransferase (Blochmanniella pennsylvanica (strain BPEN)).